The sequence spans 35 residues: Peptide ToHyp2 (35 aa).

Pro residues predominate over residues 1–29; that stretch reads LPKPPLLPPPVPGLAPGLPPLPVPDPVPH. Residues 1 to 35 are disordered; that stretch reads LPKPPLLPPPVPGLAPGLPPLPVPDPVPHPPKKPP. Residues Pro-5, Pro-9, Pro-10, Pro-12, Pro-16, Pro-20, Pro-31, and Pro-35 each carry the hydroxyproline modification.

In terms of processing, O-glycosylated; contains pentose side chains at some or all of the hydroxyproline residues. Glycosylation is required for full antifungal activity.

In terms of biological role, antimicrobial peptide. Inhibits elongation of hyphae in B.sorokiniana (IC(50)=3.8 uM) but has no effect on this process or on germination of conidia in a panel of other phytopathogenic fungi. At concentrations above 10 uM, has antibacterial activity. This is Peptide ToHyp2 from Taraxacum officinale (Common dandelion).